The following is a 137-amino-acid chain: MKPSERRKARHCATQAIYQWQMTKANVGDIEEQFKIDQDTKGVDLNYFRDLLFGVALHCNELDKVFAPFLSRPLEEVDMVDKAILRLATYELTRRDDVPPRVAINEAIELAKSFAADDSHKFVNGVLDKVIKSLNKR.

It belongs to the NusB family.

In terms of biological role, involved in transcription antitermination. Required for transcription of ribosomal RNA (rRNA) genes. Binds specifically to the boxA antiterminator sequence of the ribosomal RNA (rrn) operons. This Aeromonas hydrophila subsp. hydrophila (strain ATCC 7966 / DSM 30187 / BCRC 13018 / CCUG 14551 / JCM 1027 / KCTC 2358 / NCIMB 9240 / NCTC 8049) protein is Transcription antitermination protein NusB.